The primary structure comprises 196 residues: Thymidine kinase (196 aa).

ATP is bound by residues 9-16 and 87-90; these read SAMNAGKS and DECQ. Catalysis depends on Glu-88, which acts as the Proton acceptor. Residues Cys-145, Cys-147, Cys-182, and His-185 each coordinate Zn(2+).

It belongs to the thymidine kinase family. In terms of assembly, homotetramer.

It localises to the cytoplasm. The enzyme catalyses thymidine + ATP = dTMP + ADP + H(+). This chain is Thymidine kinase, found in Yersinia pestis.